A 384-amino-acid chain; its full sequence is Glucans biosynthesis protein C (384 aa).

10 helical membrane passes run Ala17–Trp37, Phe54–Leu74, Val91–Gln111, Leu140–Phe160, Ala173–Ile193, Phe212–Ile232, Phe240–Leu260, Thr274–Gly294, Ala311–Thr331, and Leu338–Ile358.

Belongs to the acyltransferase 3 family. OpgC subfamily.

Its subcellular location is the cell membrane. Its pathway is glycan metabolism; osmoregulated periplasmic glucan (OPG) biosynthesis. Its function is as follows. Necessary for the succinyl substitution of periplasmic glucans. Could catalyze the transfer of succinyl residues from the cytoplasmic side of the membrane to the nascent glucan backbones on the periplasmic side of the membrane. The chain is Glucans biosynthesis protein C from Salmonella schwarzengrund (strain CVM19633).